The sequence spans 409 residues: N-acetylglucosamine-6-phosphate deacetylase (409 aa).

Glu143 lines the a divalent metal cation pocket. 154–155 (AH) provides a ligand contact to substrate. Positions 211 and 232 each coordinate a divalent metal cation. Residues 235–236 (NA), Arg243, and 269–272 (DGTH) each bind substrate. Residue Asp294 is the Proton donor/acceptor of the active site. Residue 328-330 (LSG) coordinates substrate.

The protein belongs to the metallo-dependent hydrolases superfamily. NagA family. It depends on a divalent metal cation as a cofactor.

The catalysed reaction is N-acetyl-D-glucosamine 6-phosphate + H2O = D-glucosamine 6-phosphate + acetate. The protein operates within amino-sugar metabolism; N-acetylneuraminate degradation. Hydrolyzes the N-glycolyl group from N-glycolylglucosamine 6-phosphate (GlcNGc-6-P) in the N-glycolylneuraminic acid (Neu5Gc) degradation pathway. Although human is not able to catalyze formation of Neu5Gc due to the inactive CMAHP enzyme, Neu5Gc is present in food and must be degraded. In Homo sapiens (Human), this protein is N-acetylglucosamine-6-phosphate deacetylase (AMDHD2).